The chain runs to 486 residues: Cytochrome P450 monooxygenase aclC (486 aa).

Cysteine 427 contributes to the heme binding site.

This sequence belongs to the cytochrome P450 family. Requires heme as cofactor.

It participates in mycotoxin biosynthesis. Functionally, cytochrome P450 monooxygenase; part of the gene cluster that mediates the biosynthesis of aspirochlorine (or antibiotic A30641), an unusual halogenated spiro compound with distinctive antifungal properties due to selective inhibition of protein biosynthesis, and which is also active against bacteria, viruses, and murine tumor cells. The non-ribosomal peptide synthetase (NRPS) aclP is responsible the formation of the diketopiperazine (DKP) core from the condensation of 2 phenylalanine residues. One Phe residue is tailored into chlorotyrosine by hydroxylation and chlorination, whereas the second Phe undergoes an unprecedented C-C bond cleavage to be converted into glycine. After formation of the DKP, sulfur is incorporated into the DKP by conjugation with glutathione by aclG, followed by its stepwise degradation to the thiol by aclI, aclJ and aclK, and the dithiol oxidation by aclT. In addition, oxygenases (aclB, aclC, aclL and aclO) and O-methyltransferases (aclM and aclU) act as tailoring enzymes to produce the intermediate dechloroaspirochlorine. Ultimately, chlorination of dechloroaspirochlorine by the halogenase aclH is the last step in the aspirochlorine pathway. This chain is Cytochrome P450 monooxygenase aclC, found in Aspergillus oryzae (strain ATCC 42149 / RIB 40) (Yellow koji mold).